The chain runs to 701 residues: Elongation factor G (701 aa).

The tr-type G domain occupies 8 to 290; the sequence is TQYRNIGISA…AIIEYLPSPK (283 aa). GTP-binding positions include 17–24, 88–92, and 142–145; these read AHIDAGKT, DTPGH, and NKMD.

The protein belongs to the TRAFAC class translation factor GTPase superfamily. Classic translation factor GTPase family. EF-G/EF-2 subfamily.

The protein resides in the cytoplasm. Catalyzes the GTP-dependent ribosomal translocation step during translation elongation. During this step, the ribosome changes from the pre-translocational (PRE) to the post-translocational (POST) state as the newly formed A-site-bound peptidyl-tRNA and P-site-bound deacylated tRNA move to the P and E sites, respectively. Catalyzes the coordinated movement of the two tRNA molecules, the mRNA and conformational changes in the ribosome. The chain is Elongation factor G from Buchnera aphidicola subsp. Cinara cedri (strain Cc).